The chain runs to 436 residues: Enolase (436 aa).

Residue Q167 participates in (2R)-2-phosphoglycerate binding. The active-site Proton donor is the E209. 3 residues coordinate Mg(2+): D246, E291, and D318. 4 residues coordinate (2R)-2-phosphoglycerate: K343, R372, S373, and K394. The active-site Proton acceptor is the K343.

Belongs to the enolase family. In terms of assembly, component of the RNA degradosome, a multiprotein complex involved in RNA processing and mRNA degradation. It depends on Mg(2+) as a cofactor.

The protein localises to the cytoplasm. It is found in the secreted. It localises to the cell surface. The enzyme catalyses (2R)-2-phosphoglycerate = phosphoenolpyruvate + H2O. The protein operates within carbohydrate degradation; glycolysis; pyruvate from D-glyceraldehyde 3-phosphate: step 4/5. In terms of biological role, catalyzes the reversible conversion of 2-phosphoglycerate (2-PG) into phosphoenolpyruvate (PEP). It is essential for the degradation of carbohydrates via glycolysis. This is Enolase from Haemophilus influenzae (strain PittEE).